Here is a 335-residue protein sequence, read N- to C-terminus: MTWFTPDVIDAIIAVVKAIVVLLAVVVCGALLSFVERRLLGWWQDRYGPNRVGPFGMFQIAADMLKMFFKEDWTPPFADKVIFTLAPVVAMSALLIAFAVIPITPTWGVADLNIGLLFFFAMAGLSVYAVLFAGWSSNNKFALLGSLRASAQTVSYEVFMGLALMGIVVQVGSFNMRDIVEYQAQNLWFIIPQFFGFCTFFIAGVAVTHRHPFDQPEAEQELADGYHIEYAGMKWGMFFVGEYIGIILISALLVTLFFGGWHGPFDILPSLAFFWFALKTAFFIMLFILLRASIPRPRYDQVMDFSWKFCLPLTLINLLVTAAIVLLNTPAGSVQ.

A run of 8 helical transmembrane segments spans residues 12–32, 81–101, 114–134, 154–174, 187–207, 238–258, 270–290, and 307–327; these read IIAV…GALL, VIFT…FAVI, IGLL…LFAG, VSYE…VGSF, LWFI…GVAV, FFVG…TLFF, SLAF…FILL, and WKFC…IVLL.

It belongs to the complex I subunit 1 family. In terms of assembly, NDH-1 is composed of 13 different subunits. Subunits NuoA, H, J, K, L, M, N constitute the membrane sector of the complex.

It localises to the cell inner membrane. The enzyme catalyses a quinone + NADH + 5 H(+)(in) = a quinol + NAD(+) + 4 H(+)(out). In terms of biological role, NDH-1 shuttles electrons from NADH, via FMN and iron-sulfur (Fe-S) centers, to quinones in the respiratory chain. The immediate electron acceptor for the enzyme in this species is believed to be ubiquinone. Couples the redox reaction to proton translocation (for every two electrons transferred, four hydrogen ions are translocated across the cytoplasmic membrane), and thus conserves the redox energy in a proton gradient. This subunit may bind ubiquinone. The chain is NADH-quinone oxidoreductase subunit H from Pseudomonas syringae pv. tomato (strain ATCC BAA-871 / DC3000).